The sequence spans 476 residues: MAARIGSMAGLLCVRWWSSAQLAARGGPLVASQRWAGSSADTVYDVVVSGGGLVGSAMACALGHDIHFHDKKILLLEAGPKKALEKLSETYSNRVSSISPGSTTLLSSFGAWDHICNMRCKAFRRMQVWDSCSEALIMFDRDNLDDMGYIVENDVIMYALTKQLEAVADRVKVLYESKAVGYSWPGAFSMADSSPWVHITLGDGSTLQTKLLIGADGHKSGVRQAAGIQNVSWKYDQSAVVATLHLSEATENNVAWQRFLPSGPIALLPLSDTLSSLVWSTSHEHAAELVSMDEEEFVDAINSAFWSDVHHTDFVDSASAMVRHAVALLKPTKVSARQLPPSIAKVDAKSRALFPLGLGHAAEYVRPRVALIGDAAHRIHPLAGQGVNMGFGDISSLVHHLSTAAFNGKDLGSMSHLTGYETDRQRHNTALLAATDLLKRLYSTSATPLVLLRTWGLQATNAVSPLKEQIMAFASK.

A mitochondrion-targeting transit peptide spans 1–35 (MAARIGSMAGLLCVRWWSSAQLAARGGPLVASQRW). N6-succinyllysine is present on Lys219.

Belongs to the UbiH/COQ6 family. As to quaternary structure, component of a multi-subunit COQ enzyme complex, composed of at least COQ3, COQ4, COQ5, COQ6, COQ7 and COQ9. Interacts with COQ8B and COQ7. It depends on FAD as a cofactor. Expressed in the kidney, in podocytes.

The protein resides in the mitochondrion inner membrane. It localises to the golgi apparatus. Its subcellular location is the cell projection. The enzyme catalyses 4-hydroxy-3-(all-trans-decaprenyl)benzoate + 2 reduced [2Fe-2S]-[ferredoxin] + O2 + 2 H(+) = 3,4-dihydroxy-5-(all-trans-decaprenyl)benzoate + 2 oxidized [2Fe-2S]-[ferredoxin] + H2O. It carries out the reaction 2-methoxy-6-(all-trans-decaprenyl)phenol + 2 reduced [2Fe-2S]-[ferredoxin] + O2 + 2 H(+) = 2-methoxy-6-(all-trans-decaprenyl)benzene-1,4-diol + 2 oxidized [2Fe-2S]-[ferredoxin] + H2O. It functions in the pathway cofactor biosynthesis; ubiquinone biosynthesis. In terms of biological role, FAD-dependent monooxygenase required for two non-consecutive steps during ubiquinone biosynthesis. Required for the C5-ring hydroxylation during ubiquinone biosynthesis by catalyzing the hydroxylation of 4-hydroxy-3-(all-trans-decaprenyl)benzoic acid to 3,4-dihydroxy-5-(all-trans-decaprenyl)benzoic acid. Also acts downstream of COQ4, for the C1-hydroxylation during ubiquinone biosynthesis by catalyzing the hydroxylation of 2-methoxy-6-(all-trans-decaprenyl)phenol to 2-methoxy-6-(all-trans-decaprenyl)benzene-1,4-diol. The electrons required for the hydroxylation reaction are funneled indirectly to COQ6 from NADPH via a ferredoxin/ferredoxin reductase system composed of FDX2 and FDXR. The chain is Ubiquinone biosynthesis monooxygenase COQ6, mitochondrial from Mus musculus (Mouse).